Consider the following 153-residue polypeptide: Ribonuclease H (153 aa).

One can recognise an RNase H type-1 domain in the interval 1-141; it reads MKLVEIFTDG…CDELAKAGAN (141 aa). Mg(2+) contacts are provided by D9, E47, D69, and D133.

This sequence belongs to the RNase H family. Monomer. Mg(2+) is required as a cofactor.

The protein localises to the cytoplasm. The catalysed reaction is Endonucleolytic cleavage to 5'-phosphomonoester.. Endonuclease that specifically degrades the RNA of RNA-DNA hybrids. This Actinobacillus pleuropneumoniae serotype 5b (strain L20) protein is Ribonuclease H.